The following is a 218-amino-acid chain: Octanoyltransferase (218 aa).

A BPL/LPL catalytic domain is found at Thr-27–Ala-210. Residues Arg-72–His-79, Ser-139–Gly-141, and Gly-152–Ala-154 contribute to the substrate site. Cys-170 functions as the Acyl-thioester intermediate in the catalytic mechanism.

The protein belongs to the LipB family.

Its subcellular location is the cytoplasm. It carries out the reaction octanoyl-[ACP] + L-lysyl-[protein] = N(6)-octanoyl-L-lysyl-[protein] + holo-[ACP] + H(+). It participates in protein modification; protein lipoylation via endogenous pathway; protein N(6)-(lipoyl)lysine from octanoyl-[acyl-carrier-protein]: step 1/2. Functionally, catalyzes the transfer of endogenously produced octanoic acid from octanoyl-acyl-carrier-protein onto the lipoyl domains of lipoate-dependent enzymes. Lipoyl-ACP can also act as a substrate although octanoyl-ACP is likely to be the physiological substrate. In Nitratidesulfovibrio vulgaris (strain ATCC 29579 / DSM 644 / CCUG 34227 / NCIMB 8303 / VKM B-1760 / Hildenborough) (Desulfovibrio vulgaris), this protein is Octanoyltransferase.